We begin with the raw amino-acid sequence, 139 residues long: Large ribosomal subunit protein bL20 (139 aa).

This sequence belongs to the bacterial ribosomal protein bL20 family.

Functionally, binds directly to 23S ribosomal RNA and is necessary for the in vitro assembly process of the 50S ribosomal subunit. It is not involved in the protein synthesizing functions of that subunit. This Leuconostoc mesenteroides subsp. mesenteroides (strain ATCC 8293 / DSM 20343 / BCRC 11652 / CCM 1803 / JCM 6124 / NCDO 523 / NBRC 100496 / NCIMB 8023 / NCTC 12954 / NRRL B-1118 / 37Y) protein is Large ribosomal subunit protein bL20.